Reading from the N-terminus, the 192-residue chain is Probable metallophosphoesterase MJ0623 (192 aa).

Positions 41, 43, 70, 92, 115, 144, and 146 each coordinate a divalent metal cation.

This sequence belongs to the metallophosphoesterase superfamily. YfcE family. A divalent metal cation serves as cofactor.

In Methanocaldococcus jannaschii (strain ATCC 43067 / DSM 2661 / JAL-1 / JCM 10045 / NBRC 100440) (Methanococcus jannaschii), this protein is Probable metallophosphoesterase MJ0623.